The following is a 357-amino-acid chain: Protein-glutamate methylesterase/protein-glutamine glutaminase 1 (357 aa).

Residues 7–125 enclose the Response regulatory domain; that stretch reads RAVIIDDSLL…QFDPEEIGNI (119 aa). Asp58 is subject to 4-aspartylphosphate. Positions 162 to 344 constitute a CheB-type methylesterase domain; that stretch reads KKSPIQAICI…VEYIEPVTEI (183 aa). Catalysis depends on residues Ser174, His201, and Asp297.

The protein belongs to the CheB family. Phosphorylated by CheA. Phosphorylation of the N-terminal regulatory domain activates the methylesterase activity.

It localises to the cytoplasm. It carries out the reaction [protein]-L-glutamate 5-O-methyl ester + H2O = L-glutamyl-[protein] + methanol + H(+). It catalyses the reaction L-glutaminyl-[protein] + H2O = L-glutamyl-[protein] + NH4(+). Involved in chemotaxis. Part of a chemotaxis signal transduction system that modulates chemotaxis in response to various stimuli. Catalyzes the demethylation of specific methylglutamate residues introduced into the chemoreceptors (methyl-accepting chemotaxis proteins or MCP) by CheR. Also mediates the irreversible deamidation of specific glutamine residues to glutamic acid. The protein is Protein-glutamate methylesterase/protein-glutamine glutaminase 1 of Leptospira interrogans serogroup Icterohaemorrhagiae serovar Lai (strain 56601).